The following is a 233-amino-acid chain: 3-dehydroquinate dehydratase (233 aa).

3-dehydroquinate contacts are provided by residues 34-36 and R64; that span reads ELR. Catalysis depends on H118, which acts as the Proton donor/acceptor. K145 (schiff-base intermediate with substrate) is an active-site residue. R185, S205, and Q209 together coordinate 3-dehydroquinate.

It belongs to the type-I 3-dehydroquinase family. Homodimer.

The catalysed reaction is 3-dehydroquinate = 3-dehydroshikimate + H2O. It functions in the pathway metabolic intermediate biosynthesis; chorismate biosynthesis; chorismate from D-erythrose 4-phosphate and phosphoenolpyruvate: step 3/7. In terms of biological role, involved in the third step of the chorismate pathway, which leads to the biosynthesis of aromatic amino acids. Catalyzes the cis-dehydration of 3-dehydroquinate (DHQ) and introduces the first double bond of the aromatic ring to yield 3-dehydroshikimate. This is 3-dehydroquinate dehydratase from Coxiella burnetii (strain CbuK_Q154) (Coxiella burnetii (strain Q154)).